The primary structure comprises 142 residues: Large ribosomal subunit protein uL13 (142 aa).

It belongs to the universal ribosomal protein uL13 family. In terms of assembly, part of the 50S ribosomal subunit.

Its function is as follows. This protein is one of the early assembly proteins of the 50S ribosomal subunit, although it is not seen to bind rRNA by itself. It is important during the early stages of 50S assembly. The sequence is that of Large ribosomal subunit protein uL13 from Desulfotalea psychrophila (strain LSv54 / DSM 12343).